Consider the following 282-residue polypeptide: Glucuronoxylan 4-O-methyltransferase 1 (282 aa).

Residues 13-33 (VLLVFLLATLILIFIVRSTLT) form a helical membrane-spanning segment.

This sequence belongs to the methyltransferase superfamily. Expressed in rosette leaves, stems, flowers and siliques.

It is found in the golgi apparatus membrane. The enzyme catalyses glucuronoxylan D-glucuronate + n S-adenosyl-L-methionine = glucuronoxylan 4-O-methyl-D-glucuronate + n S-adenosyl-L-homocysteine + n H(+). Methyltransferase catalyzing 4-O-methylation of glucuronic acid side chains on xylan. This Arabidopsis thaliana (Mouse-ear cress) protein is Glucuronoxylan 4-O-methyltransferase 1 (GXM1).